Reading from the N-terminus, the 120-residue chain is NAD(P)H-quinone oxidoreductase subunit 3, chloroplastic (120 aa).

3 consecutive transmembrane segments (helical) span residues 9–29 (IFWA…IISG), 64–84 (MFAL…PWAV), and 88–108 (VLGV…VVGS).

Belongs to the complex I subunit 3 family. As to quaternary structure, NDH is composed of at least 16 different subunits, 5 of which are encoded in the nucleus.

It localises to the plastid. Its subcellular location is the chloroplast thylakoid membrane. The enzyme catalyses a plastoquinone + NADH + (n+1) H(+)(in) = a plastoquinol + NAD(+) + n H(+)(out). It catalyses the reaction a plastoquinone + NADPH + (n+1) H(+)(in) = a plastoquinol + NADP(+) + n H(+)(out). NDH shuttles electrons from NAD(P)H:plastoquinone, via FMN and iron-sulfur (Fe-S) centers, to quinones in the photosynthetic chain and possibly in a chloroplast respiratory chain. The immediate electron acceptor for the enzyme in this species is believed to be plastoquinone. Couples the redox reaction to proton translocation, and thus conserves the redox energy in a proton gradient. The chain is NAD(P)H-quinone oxidoreductase subunit 3, chloroplastic from Nuphar advena (Common spatterdock).